A 937-amino-acid chain; its full sequence is MELAKSFEPGNIENRWYDRWEAAGYFKPSMDTDRPSFCIQLPPPNVTGTLHMGHAFNQTIMDGLTRYYRMKGDNTLWVPGADHAGIATQIVVERQLAEQGVSRHDLGRDTFIGKVWEWKEKSGGTITSQMRRVGCSVDWDKEYFTMDDKMSTAVTEVFVRLYEQGLIYRGKRLVNWDPKLGTAVSDLEVISEEEDGKMWHIRYPVVGSDDVVVVATTRPETLLGDVAVAVNPDDERYRHLVGKQLELPLTGRTIPVIADDYVDAAFGTGFVKITPAHDFNDYQVGKRHNTALINVMSLDATMLAKAQVFGFDGSAQGSIDLPAAYAGLSTADARKAMLADLDAAGLLVDTKPHKLMVPRGDRTGSVIEPLLTDQWFVAMTKVGEGDATGKSITQKAIDAVESGEVRFVPENWVNTYNQWMNNIQDWCISRQLWWGHQIPAWYDEDGKAYVGRTLEEVQAKAPGKTLRRDEDVLDTWFSSALVPFSSLGWPNETPELKAFVPSQVLVTGYEIIFFWVARMIMMTTHFLGKVPFKDVYIHGIVRDHEGKKMSKSEGNVIDPVDLIDGIALPELITKRTTGLRRPEKAPQIVKATEKLFPEGIPAYGTDALRFTMASYASLGRSVNFDFKRAEGYRNFCNKLWNATRFVMMNVEGKDCGQDESLPLEYSFVDKWIISRLQELEAAVTEALDTYRFDMASQLIYEFVWNEYCDWYVELAKVQLANGNEAQQRATRRTLVRVLEVALRLTHPLMPFITEELWQTVAPLANAKKTDSIMVAAWPVADMSKVDAEACGRMTVFKELVNAIRNLRGEMNLGPSVKAPLFVEGPAAYADFLPYARLLGRLSDAAVVEKLPDADAPVAIAGEARLMLKVEIDKAAETARLTKEIGKAESDVEKLTAKLEKPGYVDKAPAQLVERDRAQLADLTDKLAKLKAQLLKLA.

The 'HIGH' region motif lies at 44–54; the sequence is PNVTGTLHMGH. A 'KMSKS' region motif is present at residues 548-552; sequence KMSKS. An ATP-binding site is contributed by Lys551. A coiled-coil region spans residues 874–937; it reads AAETARLTKE…KLKAQLLKLA (64 aa).

Belongs to the class-I aminoacyl-tRNA synthetase family. ValS type 1 subfamily. In terms of assembly, monomer.

The protein localises to the cytoplasm. It catalyses the reaction tRNA(Val) + L-valine + ATP = L-valyl-tRNA(Val) + AMP + diphosphate. Functionally, catalyzes the attachment of valine to tRNA(Val). As ValRS can inadvertently accommodate and process structurally similar amino acids such as threonine, to avoid such errors, it has a 'posttransfer' editing activity that hydrolyzes mischarged Thr-tRNA(Val) in a tRNA-dependent manner. This Laribacter hongkongensis (strain HLHK9) protein is Valine--tRNA ligase.